Reading from the N-terminus, the 151-residue chain is SsrA-binding protein (151 aa).

The disordered stretch occupies residues 124-151; the sequence is GKKLHDKRESEKERDWNRQKSRLLKAHG. Residues 129–141 are compositionally biased toward basic and acidic residues; it reads DKRESEKERDWNR. Basic residues predominate over residues 142–151; sequence QKSRLLKAHG.

It belongs to the SmpB family.

It localises to the cytoplasm. Functionally, required for rescue of stalled ribosomes mediated by trans-translation. Binds to transfer-messenger RNA (tmRNA), required for stable association of tmRNA with ribosomes. tmRNA and SmpB together mimic tRNA shape, replacing the anticodon stem-loop with SmpB. tmRNA is encoded by the ssrA gene; the 2 termini fold to resemble tRNA(Ala) and it encodes a 'tag peptide', a short internal open reading frame. During trans-translation Ala-aminoacylated tmRNA acts like a tRNA, entering the A-site of stalled ribosomes, displacing the stalled mRNA. The ribosome then switches to translate the ORF on the tmRNA; the nascent peptide is terminated with the 'tag peptide' encoded by the tmRNA and targeted for degradation. The ribosome is freed to recommence translation, which seems to be the essential function of trans-translation. The protein is SsrA-binding protein of Rhizobium johnstonii (strain DSM 114642 / LMG 32736 / 3841) (Rhizobium leguminosarum bv. viciae).